The primary structure comprises 739 residues: Homeobox protein SIX5 (739 aa).

3 stretches are compositionally biased toward low complexity: residues 1–24 (MATLPAEPSAGPAAGGEAVAAAAA), 34–61 (QLLQTLQAAEGEAAAAAGAGAGAAAAGA), and 74–83 (PEAASEPPTG). 4 disordered regions span residues 1-84 (MATL…PTGL), 251-294 (NRRQ…AAPV), 361-381 (LTGGGGAPPPQPSPQGASETK), and 617-650 (LSAQQPPPAAATTSSTSLPFSPDSPGLLPNFPAP). The homeobox DNA-binding region spans 201 to 260 (GEETVYCFKERSRAALKACYRGNRYPTPDEKRRLATLTGLSLTQVSNWFKNRRQRDRTGA). Over residues 279–289 (ESSRSPEDLER) the composition is skewed to basic and acidic residues. The span at 617 to 646 (LSAQQPPPAAATTSSTSLPFSPDSPGLLPN) shows a compositional bias: low complexity.

Belongs to the SIX/Sine oculis homeobox family. In terms of assembly, probably binds DNA dimer. Interacts with EYA3, and probably EYA1 and EYA2. As to expression, expressed in adult but not in fetal eyes. Found in corneal epithelium and endothelium, lens epithelium, ciliary body epithelia, cellular layers of the retina and the sclera.

It localises to the cytoplasm. It is found in the nucleus. In terms of biological role, transcription factor that is thought to be involved in regulation of organogenesis. May be involved in determination and maintenance of retina formation. Binds a 5'-GGTGTCAG-3' motif present in the ARE regulatory element of ATP1A1. Binds a 5'-TCA[AG][AG]TTNC-3' motif present in the MEF3 element in the myogenin promoter, and in the IGFBP5 promoter. Thought to be regulated by association with Dach and Eya proteins, and seems to be coactivated by EYA1, EYA2 and EYA3. This is Homeobox protein SIX5 (SIX5) from Homo sapiens (Human).